Consider the following 499-residue polypeptide: uncharacterized protein (499 aa).

11 helical membrane-spanning segments follow: residues 5 to 25, 79 to 99, 110 to 130, 132 to 152, 170 to 190, 203 to 223, 252 to 272, 286 to 306, 332 to 352, 354 to 374, and 377 to 397; these read FLLV…YNAV, LGLR…TYLL, ALLS…ARYA, PEVP…EYFT, VLTK…FYLL, YAGT…QYLV, ALDI…ALFW, VWFS…PVYI, LSLI…SLYF, FSAT…LKKY, and LPAF…LPYV.

The protein belongs to the glycosyltransferase 39 family.

It is found in the cell membrane. This is an uncharacterized protein from Aquifex aeolicus (strain VF5).